Reading from the N-terminus, the 399-residue chain is Phosphoglycerate kinase (399 aa).

Substrate contacts are provided by residues 21-23, Arg-36, 59-62, Arg-120, and Arg-158; these read DFN and HLGR. Residues Lys-209, Gly-297, Glu-328, and 355–358 each bind ATP; that span reads GGDS.

The protein belongs to the phosphoglycerate kinase family. As to quaternary structure, monomer.

The protein localises to the cytoplasm. The catalysed reaction is (2R)-3-phosphoglycerate + ATP = (2R)-3-phospho-glyceroyl phosphate + ADP. It participates in carbohydrate degradation; glycolysis; pyruvate from D-glyceraldehyde 3-phosphate: step 2/5. The polypeptide is Phosphoglycerate kinase (Streptococcus suis (strain 05ZYH33)).